We begin with the raw amino-acid sequence, 121 residues long: NADPH-dependent 7-cyano-7-deazaguanine reductase (121 aa).

Cysteine 36 serves as the catalytic Thioimide intermediate. Aspartate 43 acts as the Proton donor in catalysis. Residues 58–60 (VEL) and 77–78 (YE) contribute to the substrate site.

It belongs to the GTP cyclohydrolase I family. QueF type 1 subfamily.

It is found in the cytoplasm. It carries out the reaction 7-aminomethyl-7-carbaguanine + 2 NADP(+) = 7-cyano-7-deazaguanine + 2 NADPH + 3 H(+). The protein operates within tRNA modification; tRNA-queuosine biosynthesis. Catalyzes the NADPH-dependent reduction of 7-cyano-7-deazaguanine (preQ0) to 7-aminomethyl-7-deazaguanine (preQ1). In Rhodopirellula baltica (strain DSM 10527 / NCIMB 13988 / SH1), this protein is NADPH-dependent 7-cyano-7-deazaguanine reductase.